We begin with the raw amino-acid sequence, 131 residues long: U-scoloptoxin-Er5e (131 aa).

Positions 1 to 22 are cleaved as a signal peptide; it reads MKTNCEFPLLCLLIVLVANVEG. A propeptide spanning residues 23–94 is cleaved from the precursor; sequence EVEDNELKMV…KRLWRNWERR (72 aa). RLWRNWE repeat units lie at residues 34–40, 61–67, and 86–92; these read RLWRNWE. A Pyrrolidone carboxylic acid modification is found at Gln95. An RLWRNWE 4; approximate repeat occupies 107–113; that stretch reads ELWRNWE. Positions 112–131 are excised as a propeptide; that stretch reads WEDLKRRQVVDLNDEQKTTG.

It belongs to the scoloptoxin-08 family. Expressed by the venom gland.

It is found in the secreted. The protein is U-scoloptoxin-Er5e of Ethmostigmus rubripes (Giant centipede).